Here is a 324-residue protein sequence, read N- to C-terminus: Protein ChrB (324 aa).

Its function is as follows. Together with ChrA1, this protein reduces chromate accumulation and is essential for chromate resistance, possibly as a regulatory protein. This chain is Protein ChrB, found in Cupriavidus metallidurans (strain ATCC 43123 / DSM 2839 / NBRC 102507 / CH34) (Ralstonia metallidurans).